A 198-amino-acid chain; its full sequence is uncharacterized protein (198 aa).

A coiled-coil region spans residues Glu20–Glu58. The interval Leu144–Arg198 is disordered. Positions His176–Ser188 are enriched in basic residues. Residues Gln189–Arg198 are compositionally biased toward polar residues.

It localises to the nucleus. The protein resides in the nucleolus. This is an uncharacterized protein from Schizosaccharomyces pombe (strain 972 / ATCC 24843) (Fission yeast).